The chain runs to 333 residues: Tetraacyldisaccharide 4'-kinase (333 aa).

Residue 57–64 (IVGGAGKT) participates in ATP binding.

The protein belongs to the LpxK family.

The catalysed reaction is a lipid A disaccharide + ATP = a lipid IVA + ADP + H(+). It functions in the pathway glycolipid biosynthesis; lipid IV(A) biosynthesis; lipid IV(A) from (3R)-3-hydroxytetradecanoyl-[acyl-carrier-protein] and UDP-N-acetyl-alpha-D-glucosamine: step 6/6. Transfers the gamma-phosphate of ATP to the 4'-position of a tetraacyldisaccharide 1-phosphate intermediate (termed DS-1-P) to form tetraacyldisaccharide 1,4'-bis-phosphate (lipid IVA). This is Tetraacyldisaccharide 4'-kinase from Dechloromonas aromatica (strain RCB).